The sequence spans 318 residues: Ribonuclease Z (318 aa).

Residues H62, H64, D66, H67, H144, D215, and H273 each coordinate Zn(2+). Catalysis depends on D66, which acts as the Proton acceptor.

Belongs to the RNase Z family. Homodimer. Zn(2+) serves as cofactor.

The catalysed reaction is Endonucleolytic cleavage of RNA, removing extra 3' nucleotides from tRNA precursor, generating 3' termini of tRNAs. A 3'-hydroxy group is left at the tRNA terminus and a 5'-phosphoryl group is left at the trailer molecule.. Zinc phosphodiesterase, which displays some tRNA 3'-processing endonuclease activity. Probably involved in tRNA maturation, by removing a 3'-trailer from precursor tRNA. The sequence is that of Ribonuclease Z from Prochlorococcus marinus (strain MIT 9303).